The following is a 223-amino-acid chain: RNA-free ribonuclease P (223 aa).

The protein belongs to the HARP family.

The catalysed reaction is Endonucleolytic cleavage of RNA, removing 5'-extranucleotides from tRNA precursor.. Its function is as follows. RNA-free RNase P that catalyzes the removal of the 5'-leader sequence from pre-tRNA to produce the mature 5'-terminus. This is RNA-free ribonuclease P from Methanococcus maripaludis (strain C6 / ATCC BAA-1332).